Here is a 64-residue protein sequence, read N- to C-terminus: Large ribosomal subunit protein bL35 (64 aa).

This sequence belongs to the bacterial ribosomal protein bL35 family.

The chain is Large ribosomal subunit protein bL35 from Acidothermus cellulolyticus (strain ATCC 43068 / DSM 8971 / 11B).